A 69-amino-acid chain; its full sequence is Pancreatic propolypeptide YG (69 aa).

The protein belongs to the NPY family.

Its subcellular location is the secreted. This Lophius americanus (American angler) protein is Pancreatic propolypeptide YG.